The sequence spans 73 residues: Somatostatin-2 (73 aa).

Positions 1-45 (SAGLLTQEWSAVEDLLAQMSLPEADAQRDAEMVSTATGGGRMNQE) are excised as a propeptide. The tract at residues 23-58 (EADAQRDAEMVSTATGGGRMNQESIEPPNNLPPRER) is disordered. Cys-62 and Cys-73 form a disulfide bridge.

Belongs to the somatostatin family.

Its subcellular location is the secreted. In terms of biological role, somatostatin inhibits the release of somatotropin. The protein is Somatostatin-2 (sst2) of Platichthys flesus (European flounder).